Reading from the N-terminus, the 438-residue chain is MQTIYTKITDIKGNLITVEAEGASLGELVQIERADGRSSYASVLRFDARKVTLQVFGGTSGLSTGDKVIFLGRPMEVIYGDSLLGRRFNGTGKPIDREDECFGEPIPITTPSFNPVCRIVPREMVRTNIPMIDMFNCLVKSQKIPIFSSSGENHNALLMRIAAQTDADIVIIGGMGLTFVDYNFFVKESQRLGFADKCVMFIHKAVDAPVECVLIPDMALACAERFALEQKKNVLVLLTDMTAFADALKEMAITMDQIPANRGYPGSLYSDLAVRYEKAVDIAQGGSITLISVTTMPGDDITHPVPDNTGFITEGQFYLKDNRIDPFGSLSRLKQLVIGKKTREDHGDLANALIRLYADSRKSAERMSMGFKLSNWDKKLLAFSELFEARLMSLEVNIPLEEALDIGWKILSQSFHSEEVGIKEQLIQKYWPKACLHK.

The protein belongs to the ATPase alpha/beta chains family.

Functionally, produces ATP from ADP in the presence of a proton gradient across the membrane. The V-type beta chain is a regulatory subunit. This Chlamydia trachomatis serovar D (strain ATCC VR-885 / DSM 19411 / UW-3/Cx) protein is V-type ATP synthase beta chain (atpB).